Consider the following 459-residue polypeptide: 5-hydroxytryptamine receptor 2C (459 aa).

The first 32 residues, 1 to 32, serve as a signal peptide directing secretion; that stretch reads MVNLGTAVRSLLVHLIGLLVWQFDISISPVAA. The Extracellular portion of the chain corresponds to 33-56; the sequence is IVTDTFNSSDGGRLFQFPDGVQNW. The helical transmembrane segment at 57-81 threads the bilayer; sequence PALSIVVIIIMTIGGNILVIMAVSM. The Cytoplasmic segment spans residues 82–87; it reads EKKLHN. A helical transmembrane segment spans residues 88–112; it reads ATNYFLMSLAIADMLVGLLVMPLSL. The Extracellular portion of the chain corresponds to 113-129; sequence LAILYDYVWPLPRYLCP. The cysteines at positions 128 and 208 are disulfide-linked. A helical membrane pass occupies residues 130–152; sequence VWISLDVLFSTASIMHLCAISLD. Thr140 is an ergotamine binding site. A DRY motif; important for ligand-induced conformation changes motif is present at residues 152 to 154; it reads DRY. At 153–168 the chain is on the cytoplasmic side; that stretch reads RYVAIRNPIEHSRFNS. Residues 169–190 form a helical membrane-spanning segment; that stretch reads RTKAIMKIAIVWAISIGVSVPI. Residues 191–214 are Extracellular-facing; that stretch reads PVIGLRDESKVFVNNTTCVLNDPN. N-linked (GlcNAc...) asparagine glycans are attached at residues Asn204 and Asn205. Residue Leu210 coordinates ergotamine. Residues 215–237 traverse the membrane as a helical segment; sequence FVLIGSFVAFFIPLTIMVITYFL. Residues 238–312 are Cytoplasmic-facing; that stretch reads TIYVLRRQTL…AINNEKKASK (75 aa). The segment at 274–302 is disordered; sequence DEEENAPNPNPDQKPRRKKKEKRPRGTMQ. The segment covering 288–298 has biased composition (basic residues); the sequence is PRRKKKEKRPR. A helical transmembrane segment spans residues 313 to 337; the sequence is VLGIVFFVFLIMWCPFFITNILSVL. Cys338 and Cys342 are disulfide-bonded. The Extracellular portion of the chain corresponds to 338–348; that stretch reads CGKACNQKLME. The helical transmembrane segment at 349 to 371 threads the bilayer; it reads KLLNVFVWIGYVCSGINPLVYTL. The short motif at 365-369 is the NPxxY motif; important for ligand-induced conformation changes and signaling element; sequence NPLVY. Residues 372–459 are Cytoplasmic-facing; that stretch reads FNKIYRRAFS…NVVSERISSV (88 aa). The short motif at 457-459 is the PDZ-binding element; it reads SSV.

This sequence belongs to the G-protein coupled receptor 1 family. Interacts with MPDZ. Interacts with ARRB2. Interacts with MPP3; this interaction stabilizes the receptor at the plasma membrane and prevents the desensitization of the HTR2C receptor-mediated calcium response. As to expression, detected in brain cortex, hypothalamus, brainstem and arcuate nucleus. Detected in the paraventricular nucleus of the hypothalamus.

Its subcellular location is the cell membrane. In terms of biological role, G-protein coupled receptor for 5-hydroxytryptamine (serotonin). Also functions as a receptor for various drugs and psychoactive substances, including ergot alkaloid derivatives, 1-2,5,-dimethoxy-4-iodophenyl-2-aminopropane (DOI) and lysergic acid diethylamide (LSD). Ligand binding causes a conformation change that triggers signaling via guanine nucleotide-binding proteins (G proteins) and modulates the activity of downstream effectors. HTR2C is coupled to G(q)/G(11) G alpha proteins and activates phospholipase C-beta, releasing diacylglycerol (DAG) and inositol 1,4,5-trisphosphate (IP3) second messengers that modulate the activity of phosphatidylinositol 3-kinase and promote the release of Ca(2+) ions from intracellular stores, respectively. Beta-arrestin family members inhibit signaling via G proteins and mediate activation of alternative signaling pathways. Regulates neuronal activity via the activation of short transient receptor potential calcium channels in the brain, and thereby modulates the activation of pro-opiomelanocortin neurons and the release of CRH that then regulates the release of corticosterone. Plays a role in the regulation of appetite and eating behavior, responses to anxiogenic stimuli and stress. Plays a role in insulin sensitivity and glucose homeostasis. The polypeptide is 5-hydroxytryptamine receptor 2C (Mus musculus (Mouse)).